The primary structure comprises 496 residues: Acetyl-coenzyme A carboxylase carboxyl transferase subunit beta, chloroplastic (496 aa).

The CoA carboxyltransferase N-terminal domain occupies 229–496 (LWVQCENCYG…FFPLNKNFIK (268 aa)). Positions 233, 236, 252, and 255 each coordinate Zn(2+). A C4-type zinc finger spans residues 233-255 (CENCYGLNYKKFFRLKLHICEQC).

This sequence belongs to the AccD/PCCB family. In terms of assembly, acetyl-CoA carboxylase is a heterohexamer composed of biotin carboxyl carrier protein, biotin carboxylase and 2 subunits each of ACCase subunit alpha and ACCase plastid-coded subunit beta (accD). The cofactor is Zn(2+).

The protein resides in the plastid. Its subcellular location is the chloroplast stroma. The catalysed reaction is N(6)-carboxybiotinyl-L-lysyl-[protein] + acetyl-CoA = N(6)-biotinyl-L-lysyl-[protein] + malonyl-CoA. The protein operates within lipid metabolism; malonyl-CoA biosynthesis; malonyl-CoA from acetyl-CoA: step 1/1. In terms of biological role, component of the acetyl coenzyme A carboxylase (ACC) complex. Biotin carboxylase (BC) catalyzes the carboxylation of biotin on its carrier protein (BCCP) and then the CO(2) group is transferred by the transcarboxylase to acetyl-CoA to form malonyl-CoA. The polypeptide is Acetyl-coenzyme A carboxylase carboxyl transferase subunit beta, chloroplastic (Ranunculus macranthus (Large buttercup)).